The chain runs to 641 residues: Macrolide export ATP-binding/permease protein MacB (641 aa).

The ABC transporter domain occupies isoleucine 2–lysine 236. An ATP-binding site is contributed by glycine 34–threonine 41. Helical transmembrane passes span isoleucine 265–glycine 285, alanine 519–valine 539, methionine 571–phenylalanine 591, and alanine 604–phenylalanine 624.

This sequence belongs to the ABC transporter superfamily. Macrolide exporter (TC 3.A.1.122) family. As to quaternary structure, homodimer.

The protein resides in the cell inner membrane. Its function is as follows. Non-canonical ABC transporter that contains transmembrane domains (TMD), which form a pore in the inner membrane, and an ATP-binding domain (NBD), which is responsible for energy generation. Confers resistance against macrolides. The polypeptide is Macrolide export ATP-binding/permease protein MacB (Campylobacter jejuni subsp. jejuni serotype O:2 (strain ATCC 700819 / NCTC 11168)).